The sequence spans 267 residues: Putative metal-binding protein TM_0123 (267 aa).

The first 15 residues, 1-15 (MKKILLLLVLIVAVL), serve as a signal peptide directing secretion. Positions 53, 107, and 172 each coordinate a divalent metal cation.

This sequence belongs to the bacterial solute-binding protein 9 family.

The protein localises to the periplasm. Its function is as follows. Part of an ATP-binding cassette (ABC) transport system involved in metal import. Binds a metal with high affinity and specificity and delivers it to the membrane permease for translocation into the cytoplasm. This is Putative metal-binding protein TM_0123 from Thermotoga maritima (strain ATCC 43589 / DSM 3109 / JCM 10099 / NBRC 100826 / MSB8).